The chain runs to 844 residues: Prickle-like protein 2 (844 aa).

The PET domain maps to 18 to 126; that stretch reads FDFQRNSTSD…NVRPFPVTMT (109 aa). Phosphoserine is present on Ser-92. LIM zinc-binding domains follow at residues 128-193, 193-253, and 253-317; these read AICE…CLKP, PRCA…LYAE, and EYCD…EDPN. Disordered regions lie at residues 314-350 and 481-519; these read EDPN…TEEP and ESYS…QQCR. The span at 318–327 shows a compositional bias: polar residues; sequence GSDSSDSAFQ. Residues Ser-319, Ser-321, and Ser-322 each carry the phosphoserine modification. Residues 481–493 are compositionally biased toward low complexity; that stretch reads ESYSDMSSQSFSE. Residues Thr-534, Thr-536, and Thr-539 each carry the phosphothreonine modification. 4 positions are modified to phosphoserine: Ser-543, Ser-546, Ser-607, and Ser-642. The tract at residues 639 to 709 is disordered; that stretch reads MHQSFDFDGG…HLASEREAIS (71 aa). Basic residues predominate over residues 682–692; it reads FRPHRSRRSRR. Residues 693–709 show a composition bias toward basic and acidic residues; it reads SRSDNALHLASEREAIS. Ser-731 is subject to Phosphoserine. The segment at 822-844 is disordered; sequence STLGGRGQLHSRKRQKSKNCIIS. At Cys-841 the chain carries Cysteine methyl ester. Cys-841 carries the S-farnesyl cysteine lipid modification. Residues 842 to 844 constitute a propeptide, removed in mature form; it reads IIS.

It belongs to the prickle / espinas / testin family. In terms of tissue distribution, expressed in brain, eye and testis. Additionally in fetal brain, adult cartilage, pancreatic islet, gastric cancer and uterus tumors.

The protein localises to the nucleus membrane. The sequence is that of Prickle-like protein 2 (PRICKLE2) from Homo sapiens (Human).